Consider the following 122-residue polypeptide: Large ribosomal subunit protein uL14 (122 aa).

It belongs to the universal ribosomal protein uL14 family. In terms of assembly, part of the 50S ribosomal subunit. Forms a cluster with proteins L3 and L19. In the 70S ribosome, L14 and L19 interact and together make contacts with the 16S rRNA in bridges B5 and B8.

Functionally, binds to 23S rRNA. Forms part of two intersubunit bridges in the 70S ribosome. This chain is Large ribosomal subunit protein uL14, found in Lachnospira eligens (strain ATCC 27750 / DSM 3376 / VPI C15-48 / C15-B4) (Eubacterium eligens).